The primary structure comprises 342 residues: Probable receptor-like protein kinase At4g10390 (342 aa).

In terms of domain architecture, Protein kinase spans 41–336 (SNFSRLIGSG…IKEIPSLSFL (296 aa)). ATP-binding positions include 47 to 55 (IGSGGYSSI) and lysine 69. Aspartate 165 serves as the catalytic Proton acceptor. A phosphoserine mark is found at serine 169 and serine 201. Phosphotyrosine is present on tyrosine 220.

Belongs to the protein kinase superfamily. Ser/Thr protein kinase family.

The enzyme catalyses L-seryl-[protein] + ATP = O-phospho-L-seryl-[protein] + ADP + H(+). It carries out the reaction L-threonyl-[protein] + ATP = O-phospho-L-threonyl-[protein] + ADP + H(+). The chain is Probable receptor-like protein kinase At4g10390 from Arabidopsis thaliana (Mouse-ear cress).